A 314-amino-acid polypeptide reads, in one-letter code: Acetyl-coenzyme A carboxylase carboxyl transferase subunit beta (314 aa).

In terms of domain architecture, CoA carboxyltransferase N-terminal spans leucine 44–leucine 311. Zn(2+)-binding residues include cysteine 48, cysteine 51, cysteine 67, and cysteine 70. The C4-type zinc finger occupies cysteine 48–cysteine 70.

This sequence belongs to the AccD/PCCB family. In terms of assembly, acetyl-CoA carboxylase is a heterohexamer composed of biotin carboxyl carrier protein (AccB), biotin carboxylase (AccC) and two subunits each of ACCase subunit alpha (AccA) and ACCase subunit beta (AccD). Zn(2+) is required as a cofactor.

Its subcellular location is the cytoplasm. It catalyses the reaction N(6)-carboxybiotinyl-L-lysyl-[protein] + acetyl-CoA = N(6)-biotinyl-L-lysyl-[protein] + malonyl-CoA. It participates in lipid metabolism; malonyl-CoA biosynthesis; malonyl-CoA from acetyl-CoA: step 1/1. Component of the acetyl coenzyme A carboxylase (ACC) complex. Biotin carboxylase (BC) catalyzes the carboxylation of biotin on its carrier protein (BCCP) and then the CO(2) group is transferred by the transcarboxylase to acetyl-CoA to form malonyl-CoA. This Brevibacillus brevis (strain 47 / JCM 6285 / NBRC 100599) protein is Acetyl-coenzyme A carboxylase carboxyl transferase subunit beta.